We begin with the raw amino-acid sequence, 177 residues long: Putative adenylate kinase (177 aa).

Residues G10, G12, K13, T14, and T15 each contribute to the ATP site. The NMP stretch occupies residues 30–50 (SLRDYAIEKGIGEMKGDELEV). Positions 99 to 109 (ERGYSREKVGE) are LID. R100 and K138 together coordinate ATP.

The protein belongs to the adenylate kinase family. AK6 subfamily. Interacts with uS11. Not a structural component of 40S pre-ribosomes, but transiently interacts with them by binding to uS11.

The enzyme catalyses AMP + ATP = 2 ADP. The catalysed reaction is ATP + H2O = ADP + phosphate + H(+). Broad-specificity nucleoside monophosphate (NMP) kinase that catalyzes the reversible transfer of the terminal phosphate group between nucleoside triphosphates and monophosphates. Also has ATPase activity. Involved in the late maturation steps of the 30S ribosomal particles, specifically 16S rRNA maturation. While NMP activity is not required for ribosome maturation, ATPase activity is. Associates transiently with small ribosomal subunit protein uS11. ATP hydrolysis breaks the interaction with uS11. May temporarily remove uS11 from the ribosome to enable a conformational change of the ribosomal RNA that is needed for the final maturation step of the small ribosomal subunit. This is Putative adenylate kinase from Thermococcus gammatolerans (strain DSM 15229 / JCM 11827 / EJ3).